Here is a 469-residue protein sequence, read N- to C-terminus: Protein RUFY3 (469 aa).

Thr-5 and Thr-12 each carry phosphothreonine. Residues Tyr-27, Ser-34, and Ser-49 each carry the phosphoserine modification. Thr-51 is subject to Phosphothreonine. Asp-53 carries the phosphoserine modification. The RUN domain maps to Asp-95–Glu-227. Coiled-coil stretches lie at residues Asn-271–Glu-362 and Lys-422–Lys-463. The span at Ser-321 to Ala-337 shows a compositional bias: basic and acidic residues. The tract at residues Ser-321–Leu-342 is disordered.

In terms of assembly, interacts with PAK1. Interacts (via C-terminus) with Ras-related Rab-5 proteins. Interacts (via C-terminus) with Ras-related Rap-2 proteins. Interacts with PIK3CA and PIK3R1. Interacts (via N-terminus) with FSCN1; this interaction induces neuron axon development. Interacts with DBN1. Interacts (via the second coiled coil) with GTP-, but not GDP-bound ARL8A and ARL8B. Interacts with dynactin/DCTN1 and the dynein intermediate chain DYNC1I1/2. Directly interacts with DYNC1LI1. In terms of processing, phosphorylated by PAK1. Isoform 1 is partially phosphorylated. In terms of tissue distribution, expressed in brain (at protein level).

It localises to the cytoplasm. The protein resides in the endomembrane system. It is found in the cell projection. Its subcellular location is the invadopodium. The protein localises to the growth cone. It localises to the perikaryon. The protein resides in the filopodium. It is found in the lamellipodium. Its subcellular location is the lysosome. Its function is as follows. ARL8 effector that promotes the coupling of endolysosomes to dynein-dynactin for retrograde transport along microtubules. Acts by binding both GTP-bound ARL8 and dynein-dynactin. In nonneuronal cells, promotes concentration of endolysosomes in the juxtanuclear area. In hippocampal neurons, drives retrograde transport of endolysosomes from the axon to the soma. Plays a role in the generation of neuronal polarity formation and axon growth. Implicated in the formation of a single axon by developing neurons. May inhibit the formation of additional axons by inhibition of PI3K in minor neuronal processes. Plays a role in the formation of F-actin-enriched protrusive structures at the cell periphery. Plays a role in cytoskeletal organization by regulating the subcellular localization of FSCN1 and DBN1 at axonal growth cones. This is Protein RUFY3 from Mus musculus (Mouse).